The chain runs to 341 residues: S-adenosylmethionine:tRNA ribosyltransferase-isomerase (341 aa).

It belongs to the QueA family. In terms of assembly, monomer.

The protein localises to the cytoplasm. It carries out the reaction 7-aminomethyl-7-carbaguanosine(34) in tRNA + S-adenosyl-L-methionine = epoxyqueuosine(34) in tRNA + adenine + L-methionine + 2 H(+). Its pathway is tRNA modification; tRNA-queuosine biosynthesis. In terms of biological role, transfers and isomerizes the ribose moiety from AdoMet to the 7-aminomethyl group of 7-deazaguanine (preQ1-tRNA) to give epoxyqueuosine (oQ-tRNA). The chain is S-adenosylmethionine:tRNA ribosyltransferase-isomerase from Chlorobium chlorochromatii (strain CaD3).